Consider the following 796-residue polypeptide: MASKTKASEALKVVARCRPLSRKEEAAGHEQILTMDVKLGQVTLRNPRAAPGELPKTFTFDAVYDASSKQADLYDETVRPLIDSVLQGFNGTVFAYGQTGTGKTYTMQGTWVEPELRGVIPNAFEHIFTHISRSQNQQYLVRASYLEIYQEEIRDLLSKEPGKRLELKENPETGVYIKDLSSFVTKNVKEIEHVMNLGNQARAVGSTHMNEVSSRSHAIFVITVECSERGSDGQDHIRVGKLNLVDLAGSERQNKAGPNTPGGPATQSTAGGGGGGGGTSGSGSSGERPKEASKINLSLSALGNVIAALAGNRSTHIPYRDSKLTRLLQDSLGGNAKTIMVATLGPASHSYDESLSTLRFANRAKNIKNKPRVNEDPKDTLLREFQEEIARLKAQLEKKGMLGKRPRRKSSRRKKAVSAPAGYPEGAVIEAWVAEEEDDNNNNHRPPQPTLEAALEKNMENYLQEQKERLEEEKAAIQDDRSLVSEEKQKLLEEKEKMLEDLKREQQATELLAAKYKAMESKLLIGGRNIMDHTNEQQKMLELKRQEIAEQKRREREMQQEMLLRDEETMELRGTYSSLQQEVEVKTKKLKKLYAKLQAVKAEIQDQHEEYIRVRQDLEEAQNEQTRELKLKYLIIENFIPPEEKNKIMNRLFLDCEEEQWKFQPLVPAGVNNSQMKKRPTSAVGYKRPISQYARVAMAMGSHPRYRAENIMFLELDVSPPAIFEMEFSHDQEQDPRVLHMERLMRLDSFLERPSTSKVRKSRSWCQSPQRPPPPSTVHASMASAPLHPATVVDHD.

Residues 10–367 (ALKVVARCRP…LRFANRAKNI (358 aa)) enclose the Kinesin motor domain. An ATP-binding site is contributed by 97 to 104 (GQTGTGKT). 3 disordered regions span residues 251–292 (ERQN…PKEA), 397–421 (EKKG…SAPA), and 754–796 (PSTS…VDHD). A compositionally biased stretch (gly residues) spans 270–284 (AGGGGGGGGTSGSGS). A coiled-coil region spans residues 378 to 632 (KDTLLREFQE…NEQTRELKLK (255 aa)). Residues 401-416 (MLGKRPRRKSSRRKKA) are compositionally biased toward basic residues. The segment at 633-793 (YLIIENFIPP…SAPLHPATVV (161 aa)) is globular.

Belongs to the TRAFAC class myosin-kinesin ATPase superfamily. Kinesin family. Kinesin II subfamily. As to quaternary structure, heterodimer of KIF3A and KIF3C.

It localises to the cytoplasm. Its subcellular location is the cytoskeleton. Functionally, microtubule-based anterograde translocator for membranous organelles. The chain is Kinesin-like protein KIF3C (Kif3c) from Rattus norvegicus (Rat).